A 141-amino-acid polypeptide reads, in one-letter code: PNKALITGFWSKVKVDEVGAEALGRLLVVYPWTQRFFEHFGDLSTADAVLGNAKVKAHGKKVLDSFSZGVQHLDDLKGTFAQLSELHCDKLHVDPENFRLLGNVLVVVLARHFGKEFTPELQAEFQKVVAGVASALAHRYH.

Residues 1 to 141 (PNKALITGFW…VASALAHRYH (141 aa)) form the Globin domain. Residues histidine 58 and histidine 87 each contribute to the heme b site.

It belongs to the globin family. Heterotetramer of two alpha chains and two beta chains. In terms of tissue distribution, red blood cells.

In terms of biological role, involved in oxygen transport from the lung to the various peripheral tissues. The chain is Hemoglobin subunit beta-C from Ammotragus lervia (Barbary sheep).